The primary structure comprises 426 residues: UPF0229 protein YeaH (426 aa).

Residues 78-92 (GNDHFIQNDRIERPQ) are compositionally biased toward basic and acidic residues. The interval 78 to 108 (GNDHFIQNDRIERPQDGGGSGSGNGQASQDG) is disordered.

This sequence belongs to the UPF0229 family.

This Salmonella arizonae (strain ATCC BAA-731 / CDC346-86 / RSK2980) protein is UPF0229 protein YeaH.